The chain runs to 259 residues: Deoxyribose-phosphate aldolase (259 aa).

D102 (proton donor/acceptor) is an active-site residue. K167 (schiff-base intermediate with acetaldehyde) is an active-site residue. Catalysis depends on K201, which acts as the Proton donor/acceptor.

The protein belongs to the DeoC/FbaB aldolase family. DeoC type 2 subfamily.

Its subcellular location is the cytoplasm. It carries out the reaction 2-deoxy-D-ribose 5-phosphate = D-glyceraldehyde 3-phosphate + acetaldehyde. The protein operates within carbohydrate degradation; 2-deoxy-D-ribose 1-phosphate degradation; D-glyceraldehyde 3-phosphate and acetaldehyde from 2-deoxy-alpha-D-ribose 1-phosphate: step 2/2. In terms of biological role, catalyzes a reversible aldol reaction between acetaldehyde and D-glyceraldehyde 3-phosphate to generate 2-deoxy-D-ribose 5-phosphate. This Escherichia coli (strain SMS-3-5 / SECEC) protein is Deoxyribose-phosphate aldolase.